The following is a 386-amino-acid chain: Succinate--CoA ligase [ADP-forming] subunit beta (386 aa).

Residues 9 to 244 form the ATP-grasp domain; sequence KAVLRSYGVS…LDEEDSKEIE (236 aa). ATP contacts are provided by residues K46, 53 to 55, E99, C102, and E107; that span reads GRG. Mg(2+) is bound by residues N199 and D213. Substrate contacts are provided by residues N264 and 321 to 323; that span reads GIM.

The protein belongs to the succinate/malate CoA ligase beta subunit family. As to quaternary structure, heterotetramer of two alpha and two beta subunits. The cofactor is Mg(2+).

The catalysed reaction is succinate + ATP + CoA = succinyl-CoA + ADP + phosphate. The enzyme catalyses GTP + succinate + CoA = succinyl-CoA + GDP + phosphate. It participates in carbohydrate metabolism; tricarboxylic acid cycle; succinate from succinyl-CoA (ligase route): step 1/1. Functionally, succinyl-CoA synthetase functions in the citric acid cycle (TCA), coupling the hydrolysis of succinyl-CoA to the synthesis of either ATP or GTP and thus represents the only step of substrate-level phosphorylation in the TCA. The beta subunit provides nucleotide specificity of the enzyme and binds the substrate succinate, while the binding sites for coenzyme A and phosphate are found in the alpha subunit. The sequence is that of Succinate--CoA ligase [ADP-forming] subunit beta from Bacillus cereus (strain B4264).